Reading from the N-terminus, the 262-residue chain is ATP synthase subunit a (262 aa).

Transmembrane regions (helical) follow at residues 25–45, 86–106, 130–150, 204–226, and 240–260; these read NVHIDTLFFSVLAAIIFLAVF, VAPLALTIFCWVFIMNAIDLI, DISATLGMSLCVFALILFYTV, LIFILIAVMYSANAAIAALGIPL, and LQAFIFMMLTVVYLSIAYNKA.

It belongs to the ATPase A chain family. In terms of assembly, F-type ATPases have 2 components, CF(1) - the catalytic core - and CF(0) - the membrane proton channel. CF(1) has five subunits: alpha(3), beta(3), gamma(1), delta(1), epsilon(1). CF(0) has three main subunits: a(1), b(2) and c(9-12). The alpha and beta chains form an alternating ring which encloses part of the gamma chain. CF(1) is attached to CF(0) by a central stalk formed by the gamma and epsilon chains, while a peripheral stalk is formed by the delta and b chains.

Its subcellular location is the cell inner membrane. Its function is as follows. Key component of the proton channel; it plays a direct role in the translocation of protons across the membrane. The chain is ATP synthase subunit a from Mannheimia succiniciproducens (strain KCTC 0769BP / MBEL55E).